The following is a 646-amino-acid chain: Phosphomethylpyrimidine synthase (646 aa).

Polar residues predominate over residues Met-1–Ala-13. Residues Met-1–Asp-30 form a disordered region. Substrate is bound by residues Asn-221, Met-250, Tyr-279, His-315, Ser-335–Gly-337, Asp-376–Arg-379, and Glu-415. A Zn(2+)-binding site is contributed by His-419. Residue Tyr-442 coordinates substrate. His-483 contributes to the Zn(2+) binding site. Residues Cys-563, Cys-566, and Cys-571 each contribute to the [4Fe-4S] cluster site.

Belongs to the ThiC family. In terms of assembly, homodimer. [4Fe-4S] cluster is required as a cofactor.

The enzyme catalyses 5-amino-1-(5-phospho-beta-D-ribosyl)imidazole + S-adenosyl-L-methionine = 4-amino-2-methyl-5-(phosphooxymethyl)pyrimidine + CO + 5'-deoxyadenosine + formate + L-methionine + 3 H(+). It participates in cofactor biosynthesis; thiamine diphosphate biosynthesis. Catalyzes the synthesis of the hydroxymethylpyrimidine phosphate (HMP-P) moiety of thiamine from aminoimidazole ribotide (AIR) in a radical S-adenosyl-L-methionine (SAM)-dependent reaction. This chain is Phosphomethylpyrimidine synthase, found in Nitrobacter winogradskyi (strain ATCC 25391 / DSM 10237 / CIP 104748 / NCIMB 11846 / Nb-255).